Reading from the N-terminus, the 366-residue chain is Cytochrome c peroxidase, mitochondrial (366 aa).

The active-site Proton acceptor is the His-123. Residues 195–206 are compositionally biased toward basic and acidic residues; it reads IEWRPGRVDDNT. Residues 195 to 218 form a disordered region; the sequence is IEWRPGRVDDNTASKVPPNGRLPD. His-247 contacts heme b. Catalysis depends on Trp-263, which acts as the Tryptophan radical intermediate.

This sequence belongs to the peroxidase family. Cytochrome c peroxidase subfamily. In terms of assembly, forms a one-to-one complex with cytochrome c. It depends on heme b as a cofactor.

Its subcellular location is the mitochondrion matrix. The protein localises to the mitochondrion intermembrane space. The enzyme catalyses 2 Fe(II)-[cytochrome c] + H2O2 + 2 H(+) = 2 Fe(III)-[cytochrome c] + 2 H2O. Functionally, destroys radicals which are normally produced within the cells and which are toxic to biological systems. The polypeptide is Cytochrome c peroxidase, mitochondrial (CCP1) (Candida albicans (strain SC5314 / ATCC MYA-2876) (Yeast)).